A 307-amino-acid chain; its full sequence is Protein EI24 homolog (307 aa).

A run of 2 helical transmembrane segments spans residues 53–73 and 92–112; these read FIHCIFLNGIIFLGTYLIYLY and MFTIIYFSLWVYPVYIFSIIA. Asn-135 carries N-linked (GlcNAc...) asparagine glycosylation. The next 4 membrane-spanning stretches (helical) occupy residues 153 to 173, 175 to 195, 225 to 245, and 260 to 280; these read LFGVILVMSAIIAFIPYTNFI, FVIITWLYSFWCFDYKWILRG, FFFPMLIGNAIFSILYPLFII, and GILPKQIPIFYVPEIIVNVIL.

Belongs to the EI24 family.

The protein localises to the membrane. The sequence is that of Protein EI24 homolog from Dictyostelium discoideum (Social amoeba).